A 216-amino-acid polypeptide reads, in one-letter code: Dimethylamine corrinoid protein 1 (216 aa).

The 91-residue stretch at 1 to 91 (MTSKEELLQE…DMPAGTETKK (91 aa)) folds into the B12-binding N-terminal domain. In terms of domain architecture, B12-binding spans 92–216 (LGVIVNGTVE…AKAKELLVGK (125 aa)). His-105 is a binding site for methylcob(III)alamin.

This sequence belongs to the methylamine corrinoid protein family.

It participates in one-carbon metabolism; methanogenesis from dimethylamine. Functionally, acts as a methyl group carrier between MtbB and MtbA. The protein is Dimethylamine corrinoid protein 1 (mtbC1) of Methanosarcina mazei (strain ATCC BAA-159 / DSM 3647 / Goe1 / Go1 / JCM 11833 / OCM 88) (Methanosarcina frisia).